A 345-amino-acid chain; its full sequence is Transcription factor 19 (345 aa).

The region spanning 31-88 is the FHA domain; sequence YRLGHRADLCDVALRPQQEPGLISGIHAELHAEPRGDDWRVSLEDHSSQGTLVNNVRL. At serine 78 the chain carries Phosphoserine. 2 disordered regions span residues 147 to 167 and 190 to 227; these read AGFR…STLS and LTFS…RKSV. The PHD-type zinc-finger motif lies at 293 to 342; it reads AAPCCCLPQEETVAWVQCDGCDVWFHVACVGCSIQAAREADFRCPGCRAG. Residues cysteine 296, cysteine 298, cysteine 310, cysteine 313, histidine 318, cysteine 321, cysteine 336, and cysteine 339 each coordinate Zn(2+).

It localises to the nucleus. Its function is as follows. Potential transcription factor that may play a role in the regulation of genes involved in cell cycle G1/S transition. May bind to regulatory elements of genes, including the promoter of the transcription factor FOXO1. This is Transcription factor 19 (TCF19) from Pan troglodytes (Chimpanzee).